A 244-amino-acid chain; its full sequence is 1-(5-phosphoribosyl)-5-[(5-phosphoribosylamino)methylideneamino] imidazole-4-carboxamide isomerase (244 aa).

D12 (proton acceptor) is an active-site residue. Residue D131 is the Proton donor of the active site.

This sequence belongs to the HisA/HisF family.

Its subcellular location is the cytoplasm. The enzyme catalyses 1-(5-phospho-beta-D-ribosyl)-5-[(5-phospho-beta-D-ribosylamino)methylideneamino]imidazole-4-carboxamide = 5-[(5-phospho-1-deoxy-D-ribulos-1-ylimino)methylamino]-1-(5-phospho-beta-D-ribosyl)imidazole-4-carboxamide. It functions in the pathway amino-acid biosynthesis; L-histidine biosynthesis; L-histidine from 5-phospho-alpha-D-ribose 1-diphosphate: step 4/9. This is 1-(5-phosphoribosyl)-5-[(5-phosphoribosylamino)methylideneamino] imidazole-4-carboxamide isomerase from Nocardioides sp. (strain ATCC BAA-499 / JS614).